The sequence spans 368 residues: 3-dehydroquinate synthase (368 aa).

Residues 69 to 74 (DGEAYK), 103 to 107 (GVIGD), 127 to 128 (TT), Lys-140, and Lys-149 each bind NAD(+). The Zn(2+) site is built by Glu-182, His-245, and His-262.

This sequence belongs to the sugar phosphate cyclases superfamily. Dehydroquinate synthase family. It depends on Co(2+) as a cofactor. Requires Zn(2+) as cofactor. NAD(+) serves as cofactor.

Its subcellular location is the cytoplasm. The catalysed reaction is 7-phospho-2-dehydro-3-deoxy-D-arabino-heptonate = 3-dehydroquinate + phosphate. Its pathway is metabolic intermediate biosynthesis; chorismate biosynthesis; chorismate from D-erythrose 4-phosphate and phosphoenolpyruvate: step 2/7. In terms of biological role, catalyzes the conversion of 3-deoxy-D-arabino-heptulosonate 7-phosphate (DAHP) to dehydroquinate (DHQ). This is 3-dehydroquinate synthase from Pseudomonas paraeruginosa (strain DSM 24068 / PA7) (Pseudomonas aeruginosa (strain PA7)).